The sequence spans 72 residues: MKNSESLKEFKKLNSEQITEKIDQLRKDLFDLRFKQATRQLNETHKFKIIKKQVAQLLTLSKNQSASQTTPD.

Belongs to the universal ribosomal protein uL29 family.

This chain is Large ribosomal subunit protein uL29, found in Prochlorococcus marinus (strain AS9601).